The sequence spans 214 residues: Dephospho-CoA kinase (214 aa).

The 200-residue stretch at 3-202 folds into the DPCK domain; sequence KIGLTGGIGS…DRWLALAGAA (200 aa). 11-16 contacts ATP; that stretch reads GSGKSR.

This sequence belongs to the CoaE family.

The protein localises to the cytoplasm. The catalysed reaction is 3'-dephospho-CoA + ATP = ADP + CoA + H(+). Its pathway is cofactor biosynthesis; coenzyme A biosynthesis; CoA from (R)-pantothenate: step 5/5. In terms of biological role, catalyzes the phosphorylation of the 3'-hydroxyl group of dephosphocoenzyme A to form coenzyme A. This Bordetella pertussis (strain Tohama I / ATCC BAA-589 / NCTC 13251) protein is Dephospho-CoA kinase.